The sequence spans 582 residues: Threonine--tRNA ligase (582 aa).

The segment at 185–478 (DHRKLGKELE…LTEQYGGAFP (294 aa)) is catalytic. Cys278, His329, and His455 together coordinate Zn(2+).

Belongs to the class-II aminoacyl-tRNA synthetase family. Homodimer. Zn(2+) is required as a cofactor.

It localises to the cytoplasm. The enzyme catalyses tRNA(Thr) + L-threonine + ATP = L-threonyl-tRNA(Thr) + AMP + diphosphate + H(+). Catalyzes the attachment of threonine to tRNA(Thr) in a two-step reaction: L-threonine is first activated by ATP to form Thr-AMP and then transferred to the acceptor end of tRNA(Thr). Also edits incorrectly charged L-seryl-tRNA(Thr). This is Threonine--tRNA ligase from Dehalococcoides mccartyi (strain ATCC BAA-2266 / KCTC 15142 / 195) (Dehalococcoides ethenogenes (strain 195)).